The following is a 717-amino-acid chain: DNA-binding protein RFX2 (717 aa).

Residues 1–28 are disordered; it reads MQNSEGGADSPASVALRPAAQPMPASPQ. At Ser26 the chain carries Phosphoserine. A DNA-binding region (RFX-type winged-helix) is located at residues 194 to 269; it reads HLQWLLDNYE…YHYYGIRLKP (76 aa). The segment at 286–318 is disordered; it reads RQQPTHQKPRYRPAQKSDSLGDGSAHSNMHGMP. Residue Ser411 is modified to Phosphoserine. Over residues 685-710 the composition is skewed to basic and acidic residues; the sequence is DGHSSEADVDGRSLGEPLVKRERSDP. The segment at 685-717 is disordered; the sequence is DGHSSEADVDGRSLGEPLVKRERSDPSHPLQGI.

This sequence belongs to the RFX family. As to quaternary structure, homodimer; probably only forms homodimers in testis. Heterodimer; heterodimerizes with RFX1 and RFX3.

It is found in the nucleus. The protein resides in the cytoplasm. Transcription factor that acts as a key regulator of spermatogenesis. Acts by regulating expression of genes required for the haploid phase during spermiogenesis, such as genes required for cilium assembly and function. Recognizes and binds the X-box, a regulatory motif with DNA sequence 5'-GTNRCC(0-3N)RGYAAC-3' present on promoters. Probably activates transcription of the testis-specific histone gene H1-6. This Mus musculus (Mouse) protein is DNA-binding protein RFX2 (Rfx2).